Consider the following 210-residue polypeptide: Dephospho-CoA kinase (210 aa).

The DPCK domain maps to tryptophan 4–lysine 202. Position 12 to 17 (glycine 12 to alanine 17) interacts with ATP.

The protein belongs to the CoaE family.

The protein localises to the cytoplasm. It catalyses the reaction 3'-dephospho-CoA + ATP = ADP + CoA + H(+). Its pathway is cofactor biosynthesis; coenzyme A biosynthesis; CoA from (R)-pantothenate: step 5/5. Catalyzes the phosphorylation of the 3'-hydroxyl group of dephosphocoenzyme A to form coenzyme A. This Neisseria gonorrhoeae protein is Dephospho-CoA kinase.